We begin with the raw amino-acid sequence, 507 residues long: Maturase K (507 aa).

It belongs to the intron maturase 2 family. MatK subfamily.

It localises to the plastid. The protein localises to the chloroplast. Its function is as follows. Usually encoded in the trnK tRNA gene intron. Probably assists in splicing its own and other chloroplast group II introns. In Fagopyrum tataricum (Tartarian buckwheat), this protein is Maturase K.